Reading from the N-terminus, the 435-residue chain is Serine--tRNA ligase (435 aa).

242-244 provides a ligand contact to L-serine; that stretch reads TAE. 273 to 275 contributes to the ATP binding site; that stretch reads RSE. Glu296 lines the L-serine pocket. 360 to 363 lines the ATP pocket; that stretch reads EISS. An L-serine-binding site is contributed by Ser396.

Belongs to the class-II aminoacyl-tRNA synthetase family. Type-1 seryl-tRNA synthetase subfamily. As to quaternary structure, homodimer. The tRNA molecule binds across the dimer.

Its subcellular location is the cytoplasm. It carries out the reaction tRNA(Ser) + L-serine + ATP = L-seryl-tRNA(Ser) + AMP + diphosphate + H(+). The catalysed reaction is tRNA(Sec) + L-serine + ATP = L-seryl-tRNA(Sec) + AMP + diphosphate + H(+). It functions in the pathway aminoacyl-tRNA biosynthesis; selenocysteinyl-tRNA(Sec) biosynthesis; L-seryl-tRNA(Sec) from L-serine and tRNA(Sec): step 1/1. Its function is as follows. Catalyzes the attachment of serine to tRNA(Ser). Is also able to aminoacylate tRNA(Sec) with serine, to form the misacylated tRNA L-seryl-tRNA(Sec), which will be further converted into selenocysteinyl-tRNA(Sec). In Aliivibrio salmonicida (strain LFI1238) (Vibrio salmonicida (strain LFI1238)), this protein is Serine--tRNA ligase.